A 318-amino-acid chain; its full sequence is tRNA uridine(34) hydroxylase (318 aa).

The Rhodanese domain maps to 125–219 (QDPNTVVIDA…YGTSKDTEGK (95 aa)). The active-site Cysteine persulfide intermediate is cysteine 179.

Belongs to the TrhO family.

It carries out the reaction uridine(34) in tRNA + AH2 + O2 = 5-hydroxyuridine(34) in tRNA + A + H2O. In terms of biological role, catalyzes oxygen-dependent 5-hydroxyuridine (ho5U) modification at position 34 in tRNAs. This is tRNA uridine(34) hydroxylase from Acholeplasma laidlawii (strain PG-8A).